Here is a 72-residue protein sequence, read N- to C-terminus: Teretoxin Tsu11.2 (72 aa).

The first 21 residues, 1 to 21 (MMAKATMAFCFLLMLTTVMLP), serve as a signal peptide directing secretion. Positions 22–30 (TEGKTIAGR) are excised as a propeptide.

Belongs to the teretoxin H (TH) superfamily. Contains 4 disulfide bonds. As to expression, expressed by the venom duct.

Its subcellular location is the secreted. In Terebra subulata (Chocolate spotted auger), this protein is Teretoxin Tsu11.2.